The following is a 98-amino-acid chain: Large ribosomal subunit protein uL23 (98 aa).

The protein belongs to the universal ribosomal protein uL23 family. Part of the 50S ribosomal subunit. Contacts protein L29, and trigger factor when it is bound to the ribosome.

Its function is as follows. One of the early assembly proteins it binds 23S rRNA. One of the proteins that surrounds the polypeptide exit tunnel on the outside of the ribosome. Forms the main docking site for trigger factor binding to the ribosome. The protein is Large ribosomal subunit protein uL23 of Borreliella afzelii (strain PKo) (Borrelia afzelii).